The primary structure comprises 322 residues: Arginase-1 (322 aa).

Positions 1-12 (MSSKSKSIGIIG) are enriched in low complexity. Positions 1 to 26 (MSSKSKSIGIIGAPFSKGQPRGGVEE) are disordered. At serine 7 the chain carries Phosphoserine. The residue at position 17 (lysine 17) is an N6-succinyllysine. Residue serine 62 is modified to Phosphoserine. Mn(2+)-binding residues include histidine 101, aspartate 124, histidine 126, and aspartate 128. Residues 126–130 (HTDIN) and 137–139 (SGN) contribute to the substrate site. Phosphoserine is present on serine 163. Aspartate 183 provides a ligand contact to substrate. Residues aspartate 232 and aspartate 234 each contribute to the Mn(2+) site. Threonine 246 and glutamate 277 together coordinate substrate.

This sequence belongs to the arginase family. Homotrimer. Interacts with CMTM6. Requires Mn(2+) as cofactor.

It localises to the cytoplasm. The enzyme catalyses L-arginine + H2O = urea + L-ornithine. It functions in the pathway nitrogen metabolism; urea cycle; L-ornithine and urea from L-arginine: step 1/1. The sequence is that of Arginase-1 (ARG1) from Oryctolagus cuniculus (Rabbit).